A 216-amino-acid chain; its full sequence is MRPTPDLRCYFITGHGSHEHIVDVARRAVAGGARTVQVRSKPITARELYALTEAVALAVGETAHVLVDDRVDIALALRHRGLPVHGVHVGQDDLPVRDVRALLGEEAIIGLTTGTRELVEAANEHAEVLDYIGAGPFRPTPTKDSGRPPLGVEGYRELVELSRLPVVAIGDVTADDAPALADTGVAGLAVVRGLMESADPTGYARRLITGFGEGRQ.

Residues 37 to 41 and Asp-68 each bind 4-amino-2-methyl-5-(diphosphooxymethyl)pyrimidine; that span reads QVRSK. Mg(2+) is bound by residues Asp-69 and Asp-93. 4-amino-2-methyl-5-(diphosphooxymethyl)pyrimidine is bound at residue Thr-112. 140-142 provides a ligand contact to 2-[(2R,5Z)-2-carboxy-4-methylthiazol-5(2H)-ylidene]ethyl phosphate; that stretch reads TPT. A 4-amino-2-methyl-5-(diphosphooxymethyl)pyrimidine-binding site is contributed by Lys-143.

This sequence belongs to the thiamine-phosphate synthase family. Requires Mg(2+) as cofactor.

It carries out the reaction 2-[(2R,5Z)-2-carboxy-4-methylthiazol-5(2H)-ylidene]ethyl phosphate + 4-amino-2-methyl-5-(diphosphooxymethyl)pyrimidine + 2 H(+) = thiamine phosphate + CO2 + diphosphate. The catalysed reaction is 2-(2-carboxy-4-methylthiazol-5-yl)ethyl phosphate + 4-amino-2-methyl-5-(diphosphooxymethyl)pyrimidine + 2 H(+) = thiamine phosphate + CO2 + diphosphate. It catalyses the reaction 4-methyl-5-(2-phosphooxyethyl)-thiazole + 4-amino-2-methyl-5-(diphosphooxymethyl)pyrimidine + H(+) = thiamine phosphate + diphosphate. Its pathway is cofactor biosynthesis; thiamine diphosphate biosynthesis; thiamine phosphate from 4-amino-2-methyl-5-diphosphomethylpyrimidine and 4-methyl-5-(2-phosphoethyl)-thiazole: step 1/1. In terms of biological role, condenses 4-methyl-5-(beta-hydroxyethyl)thiazole monophosphate (THZ-P) and 2-methyl-4-amino-5-hydroxymethyl pyrimidine pyrophosphate (HMP-PP) to form thiamine monophosphate (TMP). The chain is Thiamine-phosphate synthase from Corynebacterium efficiens (strain DSM 44549 / YS-314 / AJ 12310 / JCM 11189 / NBRC 100395).